An 82-amino-acid polypeptide reads, in one-letter code: Small ribosomal subunit protein bS16 (82 aa).

This sequence belongs to the bacterial ribosomal protein bS16 family.

This is Small ribosomal subunit protein bS16 from Tolumonas auensis (strain DSM 9187 / NBRC 110442 / TA 4).